We begin with the raw amino-acid sequence, 225 residues long: MNSPIDKLERKIGYQFNDADLIHLALTHRSAAGKHNERLEFLGDSILSFVIADDLYHRFPKVNEGDMSRMRATLVRGHTLAELGREFELGDYLKLGPGELKSGGFRRDSILADAVEAIIGAVYLDSDTEVVRRIILSWYQSRLESIQPGVSQKDPKTRLQEFLQGRRNPLPVYTVTNIKGEAHNQEFTVECEVAGVDKPVIGKGTSRRKAEQAAAETALEQLSNV.

In terms of domain architecture, RNase III spans 5–127 (IDKLERKIGY…IIGAVYLDSD (123 aa)). Residue glutamate 40 participates in Mg(2+) binding. Residue aspartate 44 is part of the active site. Positions 113 and 116 each coordinate Mg(2+). The active site involves glutamate 116. The region spanning 154–224 (DPKTRLQEFL…AETALEQLSN (71 aa)) is the DRBM domain.

The protein belongs to the ribonuclease III family. In terms of assembly, homodimer. Mg(2+) serves as cofactor.

It is found in the cytoplasm. The enzyme catalyses Endonucleolytic cleavage to 5'-phosphomonoester.. In terms of biological role, digests double-stranded RNA. Involved in the processing of primary rRNA transcript to yield the immediate precursors to the large and small rRNAs (23S and 16S). Processes some mRNAs, and tRNAs when they are encoded in the rRNA operon. Processes pre-crRNA and tracrRNA of type II CRISPR loci if present in the organism. This Vibrio atlanticus (strain LGP32) (Vibrio splendidus (strain Mel32)) protein is Ribonuclease 3.